We begin with the raw amino-acid sequence, 99 residues long: Thylakoid membrane protein ssl2009 (99 aa).

A helical membrane pass occupies residues 10 to 30 (GFLLGTVIGGVVGGILGSVLA). Residues 50-84 (NLDSEENIELARRRLEDKIAQLNLVIDDVRDQLGH) adopt a coiled-coil conformation.

The protein localises to the cellular thylakoid membrane. The protein is Thylakoid membrane protein ssl2009 of Synechocystis sp. (strain ATCC 27184 / PCC 6803 / Kazusa).